Consider the following 393-residue polypeptide: Cytochrome b (393 aa).

Topologically, residues 1–33 (MTIRNQRFSLLKQPISSTLNQHLVDYPTPSNLS) are mitochondrial matrix. Residues 34–57 (YWWGFGSLAGICLVIQIVTGVFLA) form a helical membrane-spanning segment. The Mitochondrial intermembrane portion of the chain corresponds to 58–80 (MHYTPHVDLAFNSVEHIMRDVEG). The chain crosses the membrane as a helical span at residues 81 to 108 (GWLLRYMHANGASMFFIVVYLHIFRGLY). Heme b contacts are provided by His-88 and His-102. At 109 to 116 (YASYSSPR) the chain is on the mitochondrial matrix side. The chain crosses the membrane as a helical span at residues 117–141 (EFVWCLGVVIFLLMIVTAFIGYVLP). The Mitochondrial intermembrane segment spans residues 142–178 (WGQMSFWGATVITSLASAIPVVGDTIVTWLWGGFSVD). A helical membrane pass occupies residues 179–210 (NATLNRFFSLHYLLPFILVGASLLHLAALHQY). His-189 and His-203 together coordinate heme b. A ubiquinone is bound at residue His-208. The Mitochondrial matrix portion of the chain corresponds to 211–229 (GSNNPLGVHSEMDKIAFYP). The helical transmembrane segment at 230-252 (YFYVKDLVGWVAFAIFFSIWIFY) threads the bilayer. The Mitochondrial intermembrane portion of the chain corresponds to 253–293 (APNVLGHPDNYIPANPMSTPPHIVPEWYFLPIYAILRSIPD). A helical transmembrane segment spans residues 294 to 314 (KAGGVAAIALVFICLLALPFF). Residues 315-325 (KSMYVRSSSFR) are Mitochondrial matrix-facing. The chain crosses the membrane as a helical span at residues 326-346 (PIYQGMFWLLLADCLLLGWIG). Over 347–353 (CQPVEAP) the chain is Mitochondrial intermembrane. The helical transmembrane segment at 354–370 (FVTIGQISSLVFFLFFA) threads the bilayer. The Mitochondrial matrix portion of the chain corresponds to 371-393 (ITPILGRVGRGIPNSYTDETDHT).

This sequence belongs to the cytochrome b family. In terms of assembly, component of the ubiquinol-cytochrome c oxidoreductase (cytochrome b-c1 complex, complex III, CIII), a multisubunit enzyme composed of 10 subunits. The complex is composed of 3 respiratory subunits cytochrome b (MT-CYB), cytochrome c1 (CYC1-1 or CYC1-2) and Rieske protein (UCR1-1 or UCR1-2), 2 core protein subunits MPPalpha1 (or MPPalpha2) and MPPB, and 5 low-molecular weight protein subunits QCR7-1 (or QCR7-2), UCRQ-1 (or UCRQ-2), QCR9, UCRY and probably QCR6-1 (or QCR6-2). The complex exists as an obligatory dimer and forms supercomplexes (SCs) in the inner mitochondrial membrane with NADH-ubiquinone oxidoreductase (complex I, CI), resulting in different assemblies (supercomplexes SCI(1)III(2) and SCI(2)III(4)). Heme b is required as a cofactor.

It is found in the mitochondrion inner membrane. In terms of biological role, component of the ubiquinol-cytochrome c oxidoreductase, a multisubunit transmembrane complex that is part of the mitochondrial electron transport chain which drives oxidative phosphorylation. The respiratory chain contains 3 multisubunit complexes succinate dehydrogenase (complex II, CII), ubiquinol-cytochrome c oxidoreductase (cytochrome b-c1 complex, complex III, CIII) and cytochrome c oxidase (complex IV, CIV), that cooperate to transfer electrons derived from NADH and succinate to molecular oxygen, creating an electrochemical gradient over the inner membrane that drives transmembrane transport and the ATP synthase. The cytochrome b-c1 complex catalyzes electron transfer from ubiquinol to cytochrome c, linking this redox reaction to translocation of protons across the mitochondrial inner membrane, with protons being carried across the membrane as hydrogens on the quinol. In the process called Q cycle, 2 protons are consumed from the matrix, 4 protons are released into the intermembrane space and 2 electrons are passed to cytochrome c. Cytochrome b is a catalytic core subunit containing 2 b-type hemes BL and BH topographically segregated in the quinone reduction (Qi) and quinol oxidation (Q0) sites on opposite sides of the membrane. The sequence is that of Cytochrome b (MT-CYB) from Arabidopsis thaliana (Mouse-ear cress).